The following is a 301-amino-acid chain: Ribonuclease Z (301 aa).

The Zn(2+) site is built by H63, H65, D67, H68, H141, D204, and H262. D67 serves as the catalytic Proton acceptor.

This sequence belongs to the RNase Z family. As to quaternary structure, homodimer. Zn(2+) serves as cofactor.

The catalysed reaction is Endonucleolytic cleavage of RNA, removing extra 3' nucleotides from tRNA precursor, generating 3' termini of tRNAs. A 3'-hydroxy group is left at the tRNA terminus and a 5'-phosphoryl group is left at the trailer molecule.. Functionally, zinc phosphodiesterase, which displays some tRNA 3'-processing endonuclease activity. Probably involved in tRNA maturation, by removing a 3'-trailer from precursor tRNA. This chain is Ribonuclease Z, found in Streptomyces coelicolor (strain ATCC BAA-471 / A3(2) / M145).